Consider the following 98-residue polypeptide: UPF0213 protein BPUM_0019 (98 aa).

The GIY-YIG domain occupies 4-79; that stretch reads HNHYFYVLKC…KTWTRKKKDL (76 aa).

It belongs to the UPF0213 family.

The chain is UPF0213 protein BPUM_0019 from Bacillus pumilus (strain SAFR-032).